Consider the following 886-residue polypeptide: Isoleucine--tRNA ligase (886 aa).

The 'HIGH' region signature appears at 60–70; sequence PYANGDIHIGH. E546 provides a ligand contact to L-isoleucyl-5'-AMP. The short motif at 587–591 is the 'KMSKS' region element; the sequence is KMSKS. K590 is an ATP binding site. Zn(2+)-binding residues include C856, C859, C870, and C873.

This sequence belongs to the class-I aminoacyl-tRNA synthetase family. IleS type 1 subfamily. In terms of assembly, monomer. It depends on Zn(2+) as a cofactor.

It localises to the cytoplasm. It carries out the reaction tRNA(Ile) + L-isoleucine + ATP = L-isoleucyl-tRNA(Ile) + AMP + diphosphate. Functionally, catalyzes the attachment of isoleucine to tRNA(Ile). As IleRS can inadvertently accommodate and process structurally similar amino acids such as valine, to avoid such errors it has two additional distinct tRNA(Ile)-dependent editing activities. One activity is designated as 'pretransfer' editing and involves the hydrolysis of activated Val-AMP. The other activity is designated 'posttransfer' editing and involves deacylation of mischarged Val-tRNA(Ile). The polypeptide is Isoleucine--tRNA ligase (Mesomycoplasma hyopneumoniae (strain J / ATCC 25934 / NCTC 10110) (Mycoplasma hyopneumoniae)).